We begin with the raw amino-acid sequence, 486 residues long: N-succinylglutamate 5-semialdehyde dehydrogenase (486 aa).

220–225 is a binding site for NAD(+); it reads GSSRTG. Residues E243 and C277 contribute to the active site.

This sequence belongs to the aldehyde dehydrogenase family. AstD subfamily.

It carries out the reaction N-succinyl-L-glutamate 5-semialdehyde + NAD(+) + H2O = N-succinyl-L-glutamate + NADH + 2 H(+). It participates in amino-acid degradation; L-arginine degradation via AST pathway; L-glutamate and succinate from L-arginine: step 4/5. Catalyzes the NAD-dependent reduction of succinylglutamate semialdehyde into succinylglutamate. The chain is N-succinylglutamate 5-semialdehyde dehydrogenase from Shewanella halifaxensis (strain HAW-EB4).